We begin with the raw amino-acid sequence, 342 residues long: tRNA dimethylallyltransferase (342 aa).

Residue Gly39 to Thr46 participates in ATP binding. Residue Thr41–Thr46 coordinates substrate. The segment at Asp64 to Gln67 is interaction with substrate tRNA.

It belongs to the IPP transferase family. As to quaternary structure, monomer. Requires Mg(2+) as cofactor.

It carries out the reaction adenosine(37) in tRNA + dimethylallyl diphosphate = N(6)-dimethylallyladenosine(37) in tRNA + diphosphate. In terms of biological role, catalyzes the transfer of a dimethylallyl group onto the adenine at position 37 in tRNAs that read codons beginning with uridine, leading to the formation of N6-(dimethylallyl)adenosine (i(6)A). The sequence is that of tRNA dimethylallyltransferase from Chlamydia caviae (strain ATCC VR-813 / DSM 19441 / 03DC25 / GPIC) (Chlamydophila caviae).